We begin with the raw amino-acid sequence, 150 residues long: Large ribosomal subunit protein bL9 (150 aa).

Belongs to the bacterial ribosomal protein bL9 family.

Binds to the 23S rRNA. This chain is Large ribosomal subunit protein bL9, found in Sodalis glossinidius (strain morsitans).